Here is a 291-residue protein sequence, read N- to C-terminus: Pyridoxal 5'-phosphate synthase subunit PdxS (291 aa).

A D-ribose 5-phosphate-binding site is contributed by D23. K80 (schiff-base intermediate with D-ribose 5-phosphate) is an active-site residue. Position 152 (G152) interacts with D-ribose 5-phosphate. R164 lines the D-glyceraldehyde 3-phosphate pocket. D-ribose 5-phosphate is bound by residues G213 and 234–235 (GS).

This sequence belongs to the PdxS/SNZ family. In the presence of PdxT, forms a dodecamer of heterodimers.

It carries out the reaction aldehydo-D-ribose 5-phosphate + D-glyceraldehyde 3-phosphate + L-glutamine = pyridoxal 5'-phosphate + L-glutamate + phosphate + 3 H2O + H(+). It participates in cofactor biosynthesis; pyridoxal 5'-phosphate biosynthesis. Its function is as follows. Catalyzes the formation of pyridoxal 5'-phosphate from ribose 5-phosphate (RBP), glyceraldehyde 3-phosphate (G3P) and ammonia. The ammonia is provided by the PdxT subunit. Can also use ribulose 5-phosphate and dihydroxyacetone phosphate as substrates, resulting from enzyme-catalyzed isomerization of RBP and G3P, respectively. The chain is Pyridoxal 5'-phosphate synthase subunit PdxS from Haemophilus influenzae (strain ATCC 51907 / DSM 11121 / KW20 / Rd).